We begin with the raw amino-acid sequence, 406 residues long: DNA primase DnaG (406 aa).

One can recognise a Toprim domain in the interval 167–253 (DAVVIVEGRA…CVEDLSRRTV (87 aa)). Positions 173, 215, and 217 each coordinate Mg(2+). The interval 259 to 309 (NKTPASAAAPIATTQSETAATDGSATPAPTPEPAPDTAPSPDSDGDDTEAA) is disordered. The span at 261-272 (TPASAAAPIATT) shows a compositional bias: low complexity. The span at 286-296 (APTPEPAPDTA) shows a compositional bias: pro residues.

The protein belongs to the archaeal DnaG primase family. As to quaternary structure, forms a ternary complex with MCM helicase and DNA. The cofactor is Mg(2+).

It carries out the reaction ssDNA + n NTP = ssDNA/pppN(pN)n-1 hybrid + (n-1) diphosphate.. Its function is as follows. RNA polymerase that catalyzes the synthesis of short RNA molecules used as primers for DNA polymerase during DNA replication. The protein is DNA primase DnaG of Halobacterium salinarum (strain ATCC 29341 / DSM 671 / R1).